The sequence spans 253 residues: Triosephosphate isomerase (253 aa).

Position 9–11 (asparagine 9–lysine 11) interacts with substrate. Residue histidine 95 is the Electrophile of the active site. Residue glutamate 167 is the Proton acceptor of the active site. Substrate is bound by residues glycine 173, serine 213, and glycine 234 to glycine 235. Serine 213 carries the post-translational modification Phosphoserine.

Belongs to the triosephosphate isomerase family. In terms of assembly, homodimer.

The protein localises to the cytoplasm. The enzyme catalyses D-glyceraldehyde 3-phosphate = dihydroxyacetone phosphate. The protein operates within carbohydrate biosynthesis; gluconeogenesis. Its pathway is carbohydrate degradation; glycolysis; D-glyceraldehyde 3-phosphate from glycerone phosphate: step 1/1. Involved in the gluconeogenesis. Catalyzes stereospecifically the conversion of dihydroxyacetone phosphate (DHAP) to D-glyceraldehyde-3-phosphate (G3P). This Bacillus velezensis (strain DSM 23117 / BGSC 10A6 / LMG 26770 / FZB42) (Bacillus amyloliquefaciens subsp. plantarum) protein is Triosephosphate isomerase.